The chain runs to 172 residues: C-phycocyanin beta chain (172 aa).

At Asn-72 the chain carries N4-methylasparagine. 2 residues coordinate (2R,3E)-phycocyanobilin: Cys-82 and Cys-153.

This sequence belongs to the phycobiliprotein family. Heterodimer of an alpha and a beta subunit, which further assembles into trimers and the trimers into hexamers. The basic functional unit of phycobiliproteins is a ring-shaped hexamer formed from two back-to-back trimers contacting via the alpha chain subunits. The trimers are composed of alpha/beta subunit heterodimers arranged around a three-fold axis of symmetry. The phycoerythrins also contain a gamma subunit which is located in the center of the hexamer. In terms of processing, contains two covalently linked bilin chromophores.

The protein localises to the plastid. It is found in the chloroplast thylakoid membrane. Its function is as follows. Light-harvesting photosynthetic bile pigment-protein from the phycobiliprotein complex (phycobilisome, PBS). Phycocyanin is the major phycobiliprotein in the PBS rod. This is C-phycocyanin beta chain (cpcB) from Aglaothamnion neglectum (Red alga).